A 457-amino-acid chain; its full sequence is MTVTVRFAPSPTGYIHIGNTRTALSNWLYASKNNGKFILRYDDTDVERSKDEYAQAIAVDLDWLGVRPDRVEYQSKRFDIYAKAVEKLKTAGLLYACYETADELERRRKLRLARRLPPVYGREALKLTDAEKAALEAEGRKPHWRFLLPNFESDPFATQRTEVHWDDLVRGPQTVDLASMSDPILVREDGTYLYTLPSVVDDIDMGVTHIIRGDDHVTNTGVQISIFKALGATPPVFGHHNLLTTISGEGLSKRTGALSVGSLREAGYEPMAVASLAILIGTSESVTAAPDMAALAEHFDLASISKSSAKFDPSELDALNRSLLHEMPFEKAKPRLEALGICGAKAESFWLAVRGNLDRFSDVSDWWQVVSGDLPEAPDLSGEDRDFVRHAFDLLPPEPWNGQTWKSWTEAVKSATGRKGKNLFMPLRLALTGQAHGPELADLLVLVGLERTKSRRP.

A 'HIGH' region motif is present at residues 9 to 19 (PSPTGYIHIGN). A 'KMSKS' region motif is present at residues 250-254 (GLSKR). Position 253 (lysine 253) interacts with ATP.

It belongs to the class-I aminoacyl-tRNA synthetase family. Glutamate--tRNA ligase type 1 subfamily. In terms of assembly, monomer.

It localises to the cytoplasm. It catalyses the reaction tRNA(Glu) + L-glutamate + ATP = L-glutamyl-tRNA(Glu) + AMP + diphosphate. In terms of biological role, catalyzes the attachment of glutamate to tRNA(Glu) in a two-step reaction: glutamate is first activated by ATP to form Glu-AMP and then transferred to the acceptor end of tRNA(Glu). This chain is Glutamate--tRNA ligase 1, found in Brucella canis (strain ATCC 23365 / NCTC 10854 / RM-666).